Reading from the N-terminus, the 201-residue chain is MECKREEGKSYVKRGLWKPEEDMILKSYVETHGEGNWADISRRSGLKRGGKSCRLRWKNYLRPNIKRGSMSPQEQDLIIRMHKLLGNRWSLIAGRLPGRTDNEVKNYWNTHLNKKPNSRRQNAPESIVGATPFTDKPVMSTELRRSHGEGGEEESNTWMEETNHFGYDVHVGSPLPLISHYPDNTLVFDPCFSFTDFFPLL.

2 consecutive HTH myb-type domains span residues 9-61 (KSYV…KNYL) and 62-116 (RPNI…NKKP). 2 consecutive DNA-binding regions (H-T-H motif) follow at residues 37 to 61 (WADI…KNYL) and 89 to 112 (WSLI…NTHL). Residues 112 to 133 (LNKKPNSRRQNAPESIVGATPF) are disordered.

As to quaternary structure, homodimer and heterodimer with GL1. Part of the WD40-bHLH-MYB complex. Interacts with BHLH012/MYC1 and BHLH042/TT8. Interacts (via N-terminus) with GL1 and GL3. As to expression, mainly expressed in the trichomes of new leaves.

The protein resides in the nucleus. Transcription activation factor positively regulating trichomes development. Has a function nearly equivalent to that of GL1 and can complement gl1 mutants. The protein is Transcription factor MYB82 (MYB82) of Arabidopsis thaliana (Mouse-ear cress).